The chain runs to 169 residues: Large ribosomal subunit protein bL19m (169 aa).

A mitochondrion-targeting transit peptide spans 1-16; that stretch reads MWSRNVRLLGSWTRSY.

This sequence belongs to the bacterial ribosomal protein bL19 family. In terms of assembly, component of the mitochondrial large ribosomal subunit (mt-LSU). Mature yeast 74S mitochondrial ribosomes consist of a small (37S) and a large (54S) subunit. The 37S small subunit contains a 15S ribosomal RNA (15S mt-rRNA) and 34 different proteins. The 54S large subunit contains a 21S rRNA (21S mt-rRNA) and 46 different proteins.

It is found in the mitochondrion. Its function is as follows. Component of the mitochondrial ribosome (mitoribosome), a dedicated translation machinery responsible for the synthesis of mitochondrial genome-encoded proteins, including at least some of the essential transmembrane subunits of the mitochondrial respiratory chain. The mitoribosomes are attached to the mitochondrial inner membrane and translation products are cotranslationally integrated into the membrane. bL19m is essential for respiration. The polypeptide is Large ribosomal subunit protein bL19m (IMG1) (Saccharomyces cerevisiae (strain ATCC 204508 / S288c) (Baker's yeast)).